The sequence spans 301 residues: Tetrapeptide repeat homeobox protein 2 (301 aa).

Disordered regions lie at residues 1–27 (MQDP…RTVY) and 273–301 (SLST…LLDL). Composition is skewed to basic and acidic residues over residues 16–26 (PPRRQRQERTV) and 281–292 (YKEEDGFVDKNH). A DNA-binding region (homeobox) is located at residues 20-79 (QRQERTVYTESQQKVLEFYFQKDQYPNYDQRLNLAEMLSLREQQLQVWFKNRRAKLARER).

It belongs to the paired homeobox family.

Its subcellular location is the nucleus. In terms of biological role, transcription factor expressed after fertilization required for zygotic genome activation (ZGA), a critical event in early embryonic development during which the developmental control passes from maternally provided mRNAs to the expression of the zygotic genome after fertilization. Binds and activates expression of key ZGA marker genes, such as NANOGNB, ZSCAN4, DUXB, KLF5 and DPPA3. Binds to regulatory DNA sequences containing a 5'-TAATCC-3' sequence motif. This Homo sapiens (Human) protein is Tetrapeptide repeat homeobox protein 2.